The primary structure comprises 283 residues: Elongation factor Ts (283 aa).

The interval 80–83 (TDFV) is involved in Mg(2+) ion dislocation from EF-Tu.

It belongs to the EF-Ts family.

The protein localises to the cytoplasm. In terms of biological role, associates with the EF-Tu.GDP complex and induces the exchange of GDP to GTP. It remains bound to the aminoacyl-tRNA.EF-Tu.GTP complex up to the GTP hydrolysis stage on the ribosome. In Haemophilus ducreyi (strain 35000HP / ATCC 700724), this protein is Elongation factor Ts.